A 69-amino-acid polypeptide reads, in one-letter code: DNA-directed RNA polymerase subunit omega (69 aa).

The protein belongs to the RNA polymerase subunit omega family. The RNAP catalytic core consists of 2 alpha, 1 beta, 1 beta' and 1 omega subunit. When a sigma factor is associated with the core the holoenzyme is formed, which can initiate transcription.

It catalyses the reaction RNA(n) + a ribonucleoside 5'-triphosphate = RNA(n+1) + diphosphate. Promotes RNA polymerase assembly. Latches the N- and C-terminal regions of the beta' subunit thereby facilitating its interaction with the beta and alpha subunits. In Hahella chejuensis (strain KCTC 2396), this protein is DNA-directed RNA polymerase subunit omega.